A 173-amino-acid chain; its full sequence is Beta-defensin 129 (173 aa).

The first 19 residues, 1 to 19 (MKLLFPIFASLMLQYKVNT), serve as a signal peptide directing secretion. 3 disulfide bridges follow: C27–C53, C34–C48, and C38–C54. The disordered stretch occupies residues 144 to 173 (STKSNIKESRDSATASPPPAPPPPNTLPTP). Pro residues predominate over residues 159 to 173 (SPPPAPPPPNTLPTP).

This sequence belongs to the beta-defensin family.

It is found in the secreted. Functionally, has antibacterial activity. The polypeptide is Beta-defensin 129 (DEFB129) (Hylobates lar (Lar gibbon)).